The following is a 184-amino-acid chain: Probable RNA 2'-phosphotransferase (184 aa).

Belongs to the KptA/TPT1 family.

Removes the 2'-phosphate from RNA via an intermediate in which the phosphate is ADP-ribosylated by NAD followed by a presumed transesterification to release the RNA and generate ADP-ribose 1''-2''-cyclic phosphate (APPR&gt;P). May function as an ADP-ribosylase. The polypeptide is Probable RNA 2'-phosphotransferase (Rhizobium johnstonii (strain DSM 114642 / LMG 32736 / 3841) (Rhizobium leguminosarum bv. viciae)).